Here is a 256-residue protein sequence, read N- to C-terminus: Protein TV0584 (256 aa).

Belongs to the CinA family.

The protein is Protein TV0584 of Thermoplasma volcanium (strain ATCC 51530 / DSM 4299 / JCM 9571 / NBRC 15438 / GSS1).